A 215-amino-acid chain; its full sequence is Nuclear autoantigen Sp-100 (215 aa).

The SAND domain occupies 1 to 31 (EGDRGASKNWKLSIRCGGYTLKVLTENKFLP). DNA-binding regions (HMG box) lie at residues 32 to 108 (EPPS…KTYI) and 124 to 192 (PKRP…AACR). The short motif at 72-89 (KKRSEMWKTIFAKEKGKF) is the Nuclear localization signal element. Disordered regions lie at residues 104 to 124 (MKTY…PNAP) and 193 to 215 (AKGK…KKKE).

Homodimer. Interacts with members of the HP1 family of nonhistone chromosomal protein, such as CBX5 and CBX3 via the PxVxL motif. Interacts with ETS1; the interaction is direct and modulates ETS1 transcriptional activity. Interacts with the MRN complex which is composed of two heterodimers RAD50/MRE11 associated with a single NBN; recruits the complex to PML-related bodies. Interacts with HIPK2; positively regulates TP53-dependent transcription. Interacts with CASP8AP2; may negatively regulate CASP8AP2 export from the nucleus to the cytoplasm. Phosphorylated. In terms of processing, sumoylated. Sumoylated with SUMO1. Sumoylation depends on a functional nuclear localization signal but is not necessary for nuclear import or nuclear body targeting. Sumoylation may stabilize the interaction with CBX5.

Its subcellular location is the nucleus. The protein resides in the PML body. It is found in the nuclear body. It localises to the cytoplasm. Together with PML, this tumor suppressor is a major constituent of the PML bodies, a subnuclear organelle involved in a large number of physiological processes including cell growth, differentiation and apoptosis. Functions as a transcriptional coactivator of ETS1 and ETS2. Under certain conditions, it may also act as a corepressor of ETS1 preventing its binding to DNA. Through the regulation of ETS1 it may play a role in angiogenesis, controlling endothelial cell motility and invasion. Through interaction with the MRN complex it may be involved in the regulation of telomeres lengthening. May also regulate TP53-mediated transcription and through CASP8AP2, regulate FAS-mediated apoptosis. May also play a role in infection by viruses through mechanisms that may involve chromatin and/or transcriptional regulation. The protein is Nuclear autoantigen Sp-100 (SP100) of Pan troglodytes (Chimpanzee).